Here is a 245-residue protein sequence, read N- to C-terminus: Rhamnosyl O-methyltransferase (245 aa).

The N-terminal stretch at 1 to 38 is a signal peptide; it reads MGLVWRSRTSLVGQLIGLVRLVASFAAQLFYRPSDAVA.

Belongs to the rhamnosyl O-methyltransferase family.

In terms of biological role, catalyzes the O-methylation of the hydroxyl group located on C-2 of the first rhamnosyl residue linked to the phenolic group of glycosylated phenolphthiocerol dimycocerosates (PGL) and p-hydroxybenzoic acid derivatives (p-HBAD). In Mycobacterium bovis (strain ATCC BAA-935 / AF2122/97), this protein is Rhamnosyl O-methyltransferase.